A 362-amino-acid chain; its full sequence is Putative HLA class I histocompatibility antigen, alpha chain H (362 aa).

The N-terminal stretch at 1–24 is a signal peptide; the sequence is MVLMAPRTLLLLLSGALALTQTWA. The alpha-1 stretch occupies residues 25–114; sequence RSHSMRYFYT…ALRYYNQSEG (90 aa). The Extracellular segment spans residues 25-308; that stretch reads RSHSMRYFYT…EPSSQPTVPI (284 aa). Asparagine 110 carries N-linked (GlcNAc...) asparagine glycosylation. The alpha-2 stretch occupies residues 115–206; sequence GSHTMQVMYG…ENGKETLQRA (92 aa). An alpha-3 region spans residues 207–298; that stretch reads DPPKTHMTHH…GLPEPLTLRW (92 aa). The region spanning 209 to 297 is the Ig-like C1-type domain; it reads PKTHMTHHPI…EGLPEPLTLR (89 aa). A disulfide bond links cysteine 227 and cysteine 283. A connecting peptide region spans residues 299 to 308; the sequence is EPSSQPTVPI. Residues 309-332 traverse the membrane as a helical segment; it reads VGIVAGLVLLVAVVTGAVVAAVMW. At 333–362 the chain is on the cytoplasmic side; the sequence is RKKSSDRKGGSYSQAASSNSAQGSDVSLTA. The tract at residues 337-362 is disordered; sequence SDRKGGSYSQAASSNSAQGSDVSLTA. A compositionally biased stretch (low complexity) spans 342 to 356; that stretch reads GSYSQAASSNSAQGS.

The protein belongs to the MHC class I family. Heterodimer of an alpha chain and a beta chain (beta-2-microglobulin).

It is found in the cell membrane. Functionally, involved in the presentation of foreign antigens to the immune system. The chain is Putative HLA class I histocompatibility antigen, alpha chain H (HLA-H) from Homo sapiens (Human).